The primary structure comprises 319 residues: Peroxidase 62 (319 aa).

The N-terminal stretch at 1-22 (MGLVRSFALVIVFLSCLIAVYG) is a signal peptide. 4 disulfides stabilise this stretch: Cys-34–Cys-110, Cys-67–Cys-72, Cys-116–Cys-315, and Cys-195–Cys-226. His-65 (proton acceptor) is an active-site residue. Ca(2+)-binding residues include Asp-66, Val-69, Gly-71, Asp-73, and Ser-75. Pro-157 is a binding site for substrate. His-188 serves as a coordination point for heme b. Thr-189 serves as a coordination point for Ca(2+). Asn-204 carries N-linked (GlcNAc...) asparagine glycosylation. 3 residues coordinate Ca(2+): Asp-239, Ser-242, and Asp-247. Asn-253 carries an N-linked (GlcNAc...) asparagine glycan.

The protein belongs to the peroxidase family. Classical plant (class III) peroxidase subfamily. Heme b is required as a cofactor. It depends on Ca(2+) as a cofactor. Mainly expressed in roots.

It is found in the secreted. It carries out the reaction 2 a phenolic donor + H2O2 = 2 a phenolic radical donor + 2 H2O. Functionally, removal of H(2)O(2), oxidation of toxic reductants, biosynthesis and degradation of lignin, suberization, auxin catabolism, response to environmental stresses such as wounding, pathogen attack and oxidative stress. These functions might be dependent on each isozyme/isoform in each plant tissue. The chain is Peroxidase 62 (PER62) from Arabidopsis thaliana (Mouse-ear cress).